A 238-amino-acid chain; its full sequence is Ribonuclease PH (238 aa).

Phosphate is bound by residues R86 and 124–126 (GTR).

It belongs to the RNase PH family. Homohexameric ring arranged as a trimer of dimers.

The catalysed reaction is tRNA(n+1) + phosphate = tRNA(n) + a ribonucleoside 5'-diphosphate. Its function is as follows. Phosphorolytic 3'-5' exoribonuclease that plays an important role in tRNA 3'-end maturation. Removes nucleotide residues following the 3'-CCA terminus of tRNAs; can also add nucleotides to the ends of RNA molecules by using nucleoside diphosphates as substrates, but this may not be physiologically important. Probably plays a role in initiation of 16S rRNA degradation (leading to ribosome degradation) during starvation. In Actinobacillus pleuropneumoniae serotype 7 (strain AP76), this protein is Ribonuclease PH.